The chain runs to 1059 residues: Kinesin-like protein KIN-7K, chloroplastic (1059 aa).

2 stretches are compositionally biased toward low complexity: residues methionine 1–serine 35 and proline 43–phenylalanine 58. Residues methionine 1–threonine 48 constitute a chloroplast transit peptide. The segment at methionine 1–serine 99 is disordered. The segment covering phenylalanine 59–serine 69 has biased composition (gly residues). Low complexity predominate over residues arginine 70–proline 87. Pro residues predominate over residues valine 88–phenylalanine 97. In terms of domain architecture, Kinesin motor spans serine 114–valine 431. Residue glycine 194–threonine 201 participates in ATP binding. Residues alanine 435–valine 518 are a coiled coil. The interval alanine 526–proline 570 is disordered. A compositionally biased stretch (polar residues) spans serine 546–serine 569. 3 coiled-coil regions span residues glutamate 640–serine 674, glutamate 700–arginine 781, and leucine 862–aspartate 910. The RING-type zinc-finger motif lies at cysteine 1013–arginine 1048.

Belongs to the TRAFAC class myosin-kinesin ATPase superfamily. Kinesin family. KIN-7 subfamily.

It is found in the plastid. It localises to the chloroplast. This Oryza sativa subsp. japonica (Rice) protein is Kinesin-like protein KIN-7K, chloroplastic.